The primary structure comprises 303 residues: Heme A synthase (303 aa).

Over 1-8 (MFGKKNLK) the chain is Cytoplasmic. Residues 9–29 (WLGVVATLMMTFVQLGGALVT) traverse the membrane as a helical segment. At 30 to 67 (KTGSADGCGSSWPLCHGALIPEFFPIDTIIELSHRAVS) the chain is on the extracellular side. A disulfide bond links Cys-37 and Cys-44. Residue Glu-60 is part of the active site. His-63 is a heme o binding site. Residues 68 to 88 (ALSLLMVLWLVITAWKHIGYI) traverse the membrane as a helical segment. The Cytoplasmic portion of the chain corresponds to 89–93 (KEIKP). Residues 94-114 (LSIISVGFLLLQALIGAAAVI) traverse the membrane as a helical segment. Residues 115-125 (WQQNDYVLALH) are Extracellular-facing. Position 125 (His-125) interacts with heme o. The chain crosses the membrane as a helical span at residues 126–146 (FGISLISFSSVFLITLIIFSI). The Cytoplasmic portion of the chain corresponds to 147 to 163 (DQKYEADELYIKKPLRR). A helical membrane pass occupies residues 164 to 184 (LTWLMAIIIYCGVYTGALVRH). Over 185 to 215 (ADASLAYGGWPLPFHDLVPHSEQDWVQLTHR) the chain is Extracellular. Residue His-214 participates in heme b binding. A helical transmembrane segment spans residues 216–236 (IMAFIVFTIIMITYIHAVKNY). Residues 237 to 244 (PNNRTVHY) are Cytoplasmic-facing. Residues 245-265 (GYTAAFILVILQVITGALSIM) form a helical membrane-spanning segment. At 266–270 (TNVNL) the chain is on the extracellular side. The helical transmembrane segment at 271–291 (IIALFHALFITYLFGMTTYFI) threads the bilayer. His-276 provides a ligand contact to heme b. The Cytoplasmic portion of the chain corresponds to 292-303 (MLMLRSVRSDKQ).

The protein belongs to the COX15/CtaA family. Type 1 subfamily. Interacts with CtaB. It depends on heme b as a cofactor.

It localises to the cell membrane. The catalysed reaction is Fe(II)-heme o + 2 A + H2O = Fe(II)-heme a + 2 AH2. The protein operates within porphyrin-containing compound metabolism; heme A biosynthesis; heme A from heme O: step 1/1. In terms of biological role, catalyzes the conversion of heme O to heme A by two successive hydroxylations of the methyl group at C8. The first hydroxylation forms heme I, the second hydroxylation results in an unstable dihydroxymethyl group, which spontaneously dehydrates, resulting in the formyl group of heme A. The protein is Heme A synthase of Staphylococcus aureus (strain Mu3 / ATCC 700698).